Here is a 205-residue protein sequence, read N- to C-terminus: Golgi to ER traffic protein 1 (205 aa).

Topologically, residues Met-1 to Tyr-3 are lumenal. Residues Trp-4–Leu-24 form a helical membrane-spanning segment. Over Ala-25–Lys-96 the chain is Cytoplasmic. Positions Glu-32–Lys-96 form a coiled coil. Residues Leu-97–Tyr-117 traverse the membrane as a helical segment. The Lumenal portion of the chain corresponds to Ala-118–Ala-156. Residues Val-157–Ile-173 form a helical membrane-spanning segment. Residues Glu-174–Asn-205 are Cytoplasmic-facing.

The protein belongs to the WRB/GET1 family. Component of the Golgi to ER traffic (GET) complex, which is composed of GET1, GET2 and GET3. Within the complex, GET1 and GET2 form a heterotetramer which is stabilized by phosphatidylinositol binding and which binds to the GET3 homodimer.

The protein localises to the endoplasmic reticulum membrane. It is found in the golgi apparatus membrane. Functionally, required for the post-translational delivery of tail-anchored (TA) proteins to the endoplasmic reticulum. Together with GET2, acts as a membrane receptor for soluble GET3, which recognizes and selectively binds the transmembrane domain of TA proteins in the cytosol. The GET complex cooperates with the HDEL receptor ERD2 to mediate the ATP-dependent retrieval of resident ER proteins that contain a C-terminal H-D-E-L retention signal from the Golgi to the ER. The chain is Golgi to ER traffic protein 1 from Eremothecium gossypii (strain ATCC 10895 / CBS 109.51 / FGSC 9923 / NRRL Y-1056) (Yeast).